The following is a 369-amino-acid chain: MKKEKKDYYEILGVPRDATQEEIKRAYKRLVKEWHPDRHPENRKEAEQRFKEIQEAYEVLSDPQKRAMYDRFGYVGEQPTYQETESGGFFDDIFRDFENIFNRDIFDVFFGERPHQEERREYARRGEDIRYEIEVTLSDLINGAEIPVEYERYETCPRCGGTGVEPNAGYMDCPSCGGTGRIREERRSFFGYFVSERTCERCGGTGKIPREYCHECGGSGRVLRKVRRTVKIPPNVEDGTHLRITGGGNAGYYGGPYGDLIIIVRVKPDPRFKKSGSDLVYDVTIDYLQAILGTTVEVPLPEGGTTMLKIPPGTQPETVFRLKGKGLPNRYGRRGDLIVNVHVEIPKSLSREERKVLEELAKKRGVTIG.

The region spanning 7 to 73 (DYYEILGVPR…QKRAMYDRFG (67 aa)) is the J domain. The CR-type zinc-finger motif lies at 143–225 (GAEIPVEYER…CGGSGRVLRK (83 aa)). Zn(2+)-binding residues include C156, C159, C173, C176, C199, C202, C213, and C216. 4 CXXCXGXG motif repeats span residues 156–163 (CPRCGGTG), 173–180 (CPSCGGTG), 199–206 (CERCGGTG), and 213–220 (CHECGGSG).

Belongs to the DnaJ family. In terms of assembly, homodimer. Zn(2+) is required as a cofactor.

The protein resides in the cytoplasm. Participates actively in the response to hyperosmotic and heat shock by preventing the aggregation of stress-denatured proteins and by disaggregating proteins, also in an autonomous, DnaK-independent fashion. Unfolded proteins bind initially to DnaJ; upon interaction with the DnaJ-bound protein, DnaK hydrolyzes its bound ATP, resulting in the formation of a stable complex. GrpE releases ADP from DnaK; ATP binding to DnaK triggers the release of the substrate protein, thus completing the reaction cycle. Several rounds of ATP-dependent interactions between DnaJ, DnaK and GrpE are required for fully efficient folding. Also involved, together with DnaK and GrpE, in the DNA replication of plasmids through activation of initiation proteins. The protein is Chaperone protein DnaJ of Thermotoga maritima (strain ATCC 43589 / DSM 3109 / JCM 10099 / NBRC 100826 / MSB8).